A 416-amino-acid polypeptide reads, in one-letter code: Histidine--tRNA ligase (416 aa).

The protein belongs to the class-II aminoacyl-tRNA synthetase family. As to quaternary structure, homodimer.

It localises to the cytoplasm. It catalyses the reaction tRNA(His) + L-histidine + ATP = L-histidyl-tRNA(His) + AMP + diphosphate + H(+). The sequence is that of Histidine--tRNA ligase from Clostridium kluyveri (strain NBRC 12016).